Consider the following 256-residue polypeptide: Floral homeotic protein APETALA 1-1 (256 aa).

The MADS-box domain occupies M1–S61. The K-box domain maps to N88 to V178.

In terms of assembly, homodimer capable of binding to CArG-box sequences. In terms of tissue distribution, expressed in some of the meristems of arrest-stage broccoli heads.

It is found in the nucleus. Transcription factor that promotes early floral meristem identity in synergy with LEAFY. Displays a redundant function with CAULIFLOWER in the up-regulation of LEAFY. Required subsequently for the transition of an inflorescence meristem into a floral meristem, and for the normal development of sepals and petals in flowers. Regulates positively B class homeotic proteins. In Brassica oleracea var. italica (Broccoli), this protein is Floral homeotic protein APETALA 1-1 (1AP1).